Consider the following 635-residue polypeptide: Threonine--tRNA ligase (635 aa).

The 61-residue stretch at 1 to 61 (MVSIRLPDGS…DHDVALAIVT (61 aa)) folds into the TGS domain. A catalytic region spans residues 242–533 (DHRKLGKQLD…LIEHHAGAMP (292 aa)). Zn(2+) is bound by residues Cys-333, His-384, and His-510.

It belongs to the class-II aminoacyl-tRNA synthetase family. As to quaternary structure, homodimer. The cofactor is Zn(2+).

The protein localises to the cytoplasm. It carries out the reaction tRNA(Thr) + L-threonine + ATP = L-threonyl-tRNA(Thr) + AMP + diphosphate + H(+). Its function is as follows. Catalyzes the attachment of threonine to tRNA(Thr) in a two-step reaction: L-threonine is first activated by ATP to form Thr-AMP and then transferred to the acceptor end of tRNA(Thr). Also edits incorrectly charged L-seryl-tRNA(Thr). The sequence is that of Threonine--tRNA ligase from Paraburkholderia phytofirmans (strain DSM 17436 / LMG 22146 / PsJN) (Burkholderia phytofirmans).